The following is a 152-amino-acid chain: Xanthine-guanine phosphoribosyltransferase (152 aa).

5-phospho-alpha-D-ribose 1-diphosphate contacts are provided by residues 37-38, arginine 69, and 88-96; these read RG and DDLVDTGGT. Arginine 69 is a GMP binding site. Residue aspartate 89 coordinates Mg(2+). Residues aspartate 92 and isoleucine 135 each coordinate guanine. Xanthine is bound by residues aspartate 92 and isoleucine 135. GMP-binding positions include 92-96 and 134-135; these read DTGGT and WI.

The protein belongs to the purine/pyrimidine phosphoribosyltransferase family. XGPT subfamily. Homotetramer. Mg(2+) is required as a cofactor.

It localises to the cell inner membrane. The enzyme catalyses GMP + diphosphate = guanine + 5-phospho-alpha-D-ribose 1-diphosphate. It catalyses the reaction XMP + diphosphate = xanthine + 5-phospho-alpha-D-ribose 1-diphosphate. It carries out the reaction IMP + diphosphate = hypoxanthine + 5-phospho-alpha-D-ribose 1-diphosphate. The protein operates within purine metabolism; GMP biosynthesis via salvage pathway; GMP from guanine: step 1/1. Its pathway is purine metabolism; XMP biosynthesis via salvage pathway; XMP from xanthine: step 1/1. Its function is as follows. Purine salvage pathway enzyme that catalyzes the transfer of the ribosyl-5-phosphate group from 5-phospho-alpha-D-ribose 1-diphosphate (PRPP) to the N9 position of the 6-oxopurines guanine and xanthine to form the corresponding ribonucleotides GMP (guanosine 5'-monophosphate) and XMP (xanthosine 5'-monophosphate), with the release of PPi. To a lesser extent, also acts on hypoxanthine. The chain is Xanthine-guanine phosphoribosyltransferase from Escherichia coli (strain UTI89 / UPEC).